Consider the following 295-residue polypeptide: Methionine aminopeptidase (295 aa).

Residue H63 coordinates substrate. D83, D94, and H154 together coordinate a divalent metal cation. Residue H162 participates in substrate binding. The a divalent metal cation site is built by E188 and E281.

It belongs to the peptidase M24A family. Methionine aminopeptidase archaeal type 2 subfamily. As to quaternary structure, monomer. Co(2+) serves as cofactor. Zn(2+) is required as a cofactor. It depends on Mn(2+) as a cofactor. Requires Fe(2+) as cofactor.

It catalyses the reaction Release of N-terminal amino acids, preferentially methionine, from peptides and arylamides.. Removes the N-terminal methionine from nascent proteins. The N-terminal methionine is often cleaved when the second residue in the primary sequence is small and uncharged (Met-Ala-, Cys, Gly, Pro, Ser, Thr, or Val). This chain is Methionine aminopeptidase, found in Thermococcus kodakarensis (strain ATCC BAA-918 / JCM 12380 / KOD1) (Pyrococcus kodakaraensis (strain KOD1)).